The chain runs to 140 residues: Class I hydrophobin 1 (140 aa).

The signal sequence occupies residues 1 to 18 (MKFAAVVVLAAAAAAVSA). The tract at residues 22 to 60 (AQRMARGLPPKAPIRRHGTPADTEKRSHPSSTGGGQCNT) is disordered. Cystine bridges form between Cys58–Cys119, Cys65–Cys113, Cys66–Cys99, and Cys120–Cys133.

Belongs to the fungal hydrophobin family. As to quaternary structure, self-assembles to form functional amyloid fibrils called rodlets. Self-assembly into fibrillar rodlets occurs spontaneously at hydrophobic:hydrophilic interfaces and the rodlets further associate laterally to form amphipathic monolayers.

It is found in the secreted. It localises to the cell wall. Its function is as follows. Aerial growth, conidiation, and dispersal of filamentous fungi in the environment rely upon a capability of their secreting small amphipathic proteins called hydrophobins (HPBs) with low sequence identity. Class I can self-assemble into an outermost layer of rodlet bundles on aerial cell surfaces, conferring cellular hydrophobicity that supports fungal growth, development and dispersal; whereas Class II form highly ordered films at water-air interfaces through intermolecular interactions but contribute nothing to the rodlet structure. This Pisolithus tinctorius (Dead man's foot) protein is Class I hydrophobin 1.